Here is a 222-residue protein sequence, read N- to C-terminus: Capsular polysaccharide type 5 biosynthesis protein cap5A (222 aa).

The next 2 helical transmembrane spans lie at isoleucine 20–leucine 40 and valine 172–phenylalanine 192.

This sequence belongs to the CpsC/CapA family.

It localises to the cell membrane. Its function is as follows. Required for the biosynthesis of type 5 capsular polysaccharide (Cap5/CP5). Might act as the chain-length regulator. The chain is Capsular polysaccharide type 5 biosynthesis protein cap5A (cap5A) from Staphylococcus aureus (strain Newman).